A 267-amino-acid chain; its full sequence is Outer membrane protein assembly factor BamD (267 aa).

The N-terminal stretch at M1 to A16 is a signal peptide. A lipid anchor (N-palmitoyl cysteine) is attached at C17. A lipid anchor (S-diacylglycerol cysteine) is attached at C17.

This sequence belongs to the BamD family. As to quaternary structure, part of the Bam complex.

It is found in the cell outer membrane. In terms of biological role, part of the outer membrane protein assembly complex, which is involved in assembly and insertion of beta-barrel proteins into the outer membrane. Required for efficient transformation of Neisseria meningitidis by species-related DNA. The protein is Outer membrane protein assembly factor BamD of Neisseria meningitidis serogroup B (strain ATCC BAA-335 / MC58).